The sequence spans 651 residues: MBT domain-containing protein 1 (651 aa).

A disordered region spans residues 21-55; it reads SFGMFDGYDSCSEDTSSSSSSDESEEEVAPLPSSL. The span at 29-41 shows a compositional bias: low complexity; the sequence is DSCSEDTSSSSSS. The FCS-type zinc-finger motif lies at 68 to 103; the sequence is PDGKSGMATCEMCGMVGVRDAFYSKTKRFCSVSCSR. Zn(2+) is bound by residues cysteine 77, cysteine 80, cysteine 97, and cysteine 101. MBT repeat units lie at residues 164-268, 276-373, 374-479, and 487-583; these read FSWG…LVPP, TNWK…IGHR, FKRT…LTPP, and FKWF…LQPP. Disordered regions lie at residues 581–610 and 629–651; these read QPPAPQSNKDSQSNISKQKKKSKSQPYKGH and TFLQGASDQESNGSGSYYIKQEP. A compositionally biased stretch (low complexity) spans 586–596; sequence QSNKDSQSNIS. The span at 597–610 shows a compositional bias: basic residues; that stretch reads KQKKKSKSQPYKGH. A compositionally biased stretch (polar residues) spans 632-643; sequence QGASDQESNGSG.

In terms of assembly, monomer. Component of the NuA4 histone acetyltransferase complex.

The protein localises to the nucleus. Its subcellular location is the chromosome. In terms of biological role, chromatin reader component of the NuA4 histone acetyltransferase complex, a multiprotein complex involved in transcriptional activation of select genes principally by acetylation of nucleosomal histones H4 and H2A. The NuA4 complex plays a direct role in repair of DNA double-strand breaks (DSBs) by promoting homologous recombination (HR). MBTD1 specifically recognizes and binds monomethylated and dimethylated 'Lys-20' on histone H4 (H4K20me1 and H4K20me2, respectively). In the NuA4 complex, MBTD1 promotes recruitment of the complex to H4K20me marks by competing with TP53BP1 for binding to H4K20me. Following recruitment to H4K20me at DNA breaks, the NuA4 complex catalyzes acetylation of 'Lys-15' on histone H2A (H2AK15), blocking the ubiquitination mark required for TP53BP1 localization at DNA breaks, thereby promoting homologous recombination (HR). This chain is MBT domain-containing protein 1, found in Xenopus tropicalis (Western clawed frog).